A 116-amino-acid polypeptide reads, in one-letter code: MEYYIRETLITDFQDVKTLKNKRKCFSFFFELRLFSPQCLFIVYFFYLLHVRINTSPLFIKTTTRPTALIHITKYSEALASRLLKGHMTQLSLRTILPPAHTKNLHRQQPTTWLDS.

This is an uncharacterized protein from Schizosaccharomyces pombe (strain 972 / ATCC 24843) (Fission yeast).